The primary structure comprises 380 residues: Cytochrome b (380 aa).

Transmembrane regions (helical) follow at residues 33 to 53 (FGSL…FLAM), 77 to 98 (WIIR…FLHV), 113 to 133 (WNIG…GYVL), and 178 to 198 (FFTL…LHLL). Heme b contacts are provided by His-83 and His-97. His-182 and His-196 together coordinate heme b. His-201 serves as a coordination point for a ubiquinone. The next 4 helical transmembrane spans lie at 226–246 (TKDI…TLFS), 288–308 (LGGV…PILH), 320–340 (LSQL…WIGG), and 347–367 (FITI…ILMP).

This sequence belongs to the cytochrome b family. As to quaternary structure, the cytochrome bc1 complex contains 11 subunits: 3 respiratory subunits (MT-CYB, CYC1 and UQCRFS1), 2 core proteins (UQCRC1 and UQCRC2) and 6 low-molecular weight proteins (UQCRH/QCR6, UQCRB/QCR7, UQCRQ/QCR8, UQCR10/QCR9, UQCR11/QCR10 and a cleavage product of UQCRFS1). This cytochrome bc1 complex then forms a dimer. Heme b serves as cofactor.

It localises to the mitochondrion inner membrane. Component of the ubiquinol-cytochrome c reductase complex (complex III or cytochrome b-c1 complex) that is part of the mitochondrial respiratory chain. The b-c1 complex mediates electron transfer from ubiquinol to cytochrome c. Contributes to the generation of a proton gradient across the mitochondrial membrane that is then used for ATP synthesis. This chain is Cytochrome b (MT-CYB), found in Pan paniscus (Pygmy chimpanzee).